A 358-amino-acid polypeptide reads, in one-letter code: MAGHVSAVDDILAEYHGLEEQMADPALHNDPAAARRVGKRYSELQPIINVHRQLVQVRDDLEAAREMAHEDHEFAAEAERLEVELVELEEKLADLLAPRDEHDGDDIVMEIKAGAGGEEAALFAGDLLRMYQKYADKHGFIIEVLDSAESDLGGVKDITLSIRSRQPSRDGAWSQFKFEGGVHRVQRVPVTESQGRIQTSAAGVLVYPEPDEVEDVEIDEKEIRVDVYRSSGKGGQGVNTTDSAVRITHLPTGIVVTCQKERSQIQNRARAMQVLAARLQALQKEEADAEAAEGRASQIRTMDRSERIRTYNWPENRISDHRIGFKANNLDAVLNGELDDLFTALRAAERAERLEADN.

The residue at position 236 (Gln236) is an N5-methylglutamine.

The protein belongs to the prokaryotic/mitochondrial release factor family. In terms of processing, methylated by PrmC. Methylation increases the termination efficiency of RF1.

The protein resides in the cytoplasm. Peptide chain release factor 1 directs the termination of translation in response to the peptide chain termination codons UAG and UAA. The sequence is that of Peptide chain release factor 1 from Corynebacterium efficiens (strain DSM 44549 / YS-314 / AJ 12310 / JCM 11189 / NBRC 100395).